Reading from the N-terminus, the 1057-residue chain is MPKRNDIKTILVIGSGPIIIGQAAEFDYAGTQACLALKEEGYRVILVNSNPATIMTDKEIADKVYIEPLTHNFIARIIRKEQPDALLPTLGGQTGLNMAIQLHESGVLQDNNVQLLGTELTSIQQAEDREMFRTLMNDLNVPVPESDIVNTVEQAFKFKEQVGYPLIVRPAFTMGGTGGGICHNDEELHEIVSNGLHYSPATQCLLEKSIAGFKEIEYEVMRDKNDNAIVVCNMENIDPVGIHTGDSIVVAPSQTLSDVEYQMLRDVSLKVIRALGIEGGCNVQLALDPHSFDYYIIEVNPRVSRSSALASKATGYPIAKLAAKIAVGLTLDEMLNPITGTSYAAFEPTLDYVISKIPRFPFDKFEKGERELGTQMKATGEVMAIGRTYEESLLKAIRSLEYGVHHLGLPNGESFDLDYIKERISHQDDERLFFIGEAIRRGTTLEEIHNMTQIDYFFLHKFQNIIDIEHQLKEHQGDLEYLKYAKDYGFSDKTIAHRFNMTEEEVYQLRMENDIKPVYKMVDTCAAEFESSTPYYYGTYETENESIVTDKEKILVLGSGPIRIGQGVEFDYATVHAVWAIQKAGYEAIIVNNNPETVSTDFSISDKLYFEPLTEEDVMNIINLEKPKGVVVQFGGQTAINLADKLAKHGVKILGTSLENLNRAEDRKEFEALLRKINVPQPQGKTATSPEEALANAAEIGYPVVVRPSYVLGGRAMEIVDNDKELENYMTQAVKASPEHPVLVDRYLTGKEIEVDAICDGETVIIPGIMEHIERAGVHSGDSIAVYPPQTLTEDELATLEDYTIKLAKGLNIIGLINIQFVIAHDGVYVLEVNPRSSRTVPFLSKITDIPMAQLAMRAIIGEKLTDMGYQEGVQPYAEGVFVKAPVFSFNKLKNVDITLGPEMKSTGEVMGKDTTLEKALFKGLTGSGVEVKDHGTVLMTVSDKDKEEVVKLAQCLNEVGYKILATSGTANKLAEYDIPAEVVGKIGGENDLLTRIQNGDVQIVINTMTKGKEVERDGFQIRRTTVENGIPCLTSLDTANALTNVIESMTFTMRQM.

Positions 1-401 (MPKRNDIKTI…SLLKAIRSLE (401 aa)) are carboxyphosphate synthetic domain. Arg-129, Arg-169, Gly-175, Gly-176, Lys-208, Ile-210, Glu-215, Gly-241, Ile-242, His-243, Gln-284, and Glu-298 together coordinate ATP. An ATP-grasp 1 domain is found at 133–327 (RTLMNDLNVP…IAKLAAKIAV (195 aa)). Mg(2+) contacts are provided by Gln-284, Glu-298, and Asn-300. The Mn(2+) site is built by Gln-284, Glu-298, and Asn-300. Residues 402–546 (YGVHHLGLPN…YGTYETENES (145 aa)) are oligomerization domain. Residues 547–929 (IVTDKEKILV…ALFKGLTGSG (383 aa)) form a carbamoyl phosphate synthetic domain region. The region spanning 671–861 (EALLRKINVP…MAQLAMRAII (191 aa)) is the ATP-grasp 2 domain. Arg-707, Arg-746, Leu-748, Glu-752, Gly-777, Val-778, His-779, Ser-780, Gln-820, and Glu-832 together coordinate ATP. 3 residues coordinate Mg(2+): Gln-820, Glu-832, and Asn-834. Mn(2+) contacts are provided by Gln-820, Glu-832, and Asn-834. The MGS-like domain occupies 930–1057 (VEVKDHGTVL…ESMTFTMRQM (128 aa)). Residues 930–1057 (VEVKDHGTVL…ESMTFTMRQM (128 aa)) form an allosteric domain region.

It belongs to the CarB family. As to quaternary structure, composed of two chains; the small (or glutamine) chain promotes the hydrolysis of glutamine to ammonia, which is used by the large (or ammonia) chain to synthesize carbamoyl phosphate. Tetramer of heterodimers (alpha,beta)4. Requires Mg(2+) as cofactor. Mn(2+) is required as a cofactor.

It carries out the reaction hydrogencarbonate + L-glutamine + 2 ATP + H2O = carbamoyl phosphate + L-glutamate + 2 ADP + phosphate + 2 H(+). The enzyme catalyses hydrogencarbonate + NH4(+) + 2 ATP = carbamoyl phosphate + 2 ADP + phosphate + 2 H(+). The protein operates within amino-acid biosynthesis; L-arginine biosynthesis; carbamoyl phosphate from bicarbonate: step 1/1. Its pathway is pyrimidine metabolism; UMP biosynthesis via de novo pathway; (S)-dihydroorotate from bicarbonate: step 1/3. In terms of biological role, large subunit of the glutamine-dependent carbamoyl phosphate synthetase (CPSase). CPSase catalyzes the formation of carbamoyl phosphate from the ammonia moiety of glutamine, carbonate, and phosphate donated by ATP, constituting the first step of 2 biosynthetic pathways, one leading to arginine and/or urea and the other to pyrimidine nucleotides. The large subunit (synthetase) binds the substrates ammonia (free or transferred from glutamine from the small subunit), hydrogencarbonate and ATP and carries out an ATP-coupled ligase reaction, activating hydrogencarbonate by forming carboxy phosphate which reacts with ammonia to form carbamoyl phosphate. This chain is Carbamoyl phosphate synthase large chain, found in Staphylococcus aureus (strain MRSA252).